Reading from the N-terminus, the 333-residue chain is cGAMP-activated phospholipase (333 aa).

The PNPLA domain maps to 10–191 (LALSGGGYRG…VGNAPGLFGL (182 aa)). The GXGXXG motif lies at 14–19 (GGGYRG). Residues 46 to 50 (GTSAG) carry the GXSXG motif. Ser48 (nucleophile) is an active-site residue. Asp178 (proton acceptor) is an active-site residue. The DGA/G motif lies at 178 to 180 (DGG).

The protein belongs to the patatin family.

It carries out the reaction a 1,2-diacyl-sn-glycero-3-phosphocholine + H2O = a 2-acyl-sn-glycero-3-phosphocholine + a fatty acid + H(+). The enzyme catalyses 1,2-di-(9Z-octadecenoyl)-sn-glycero-3-phosphoethanolamine + 2 H2O = sn-glycero-3-phosphoethanolamine + 2 (9Z)-octadecenoate + 2 H(+). Its activity is regulated as follows. Phospholipase activity is specifically activated upon cGAMP binding, which is produced by the cognate cyclic nucleotide synthase encoded in the same operon. Is not activated by cyclic dinucleotides 2',3'-cGAMP, c-diAMP or 3',3'-c-diGMP. Effector phospholipase of a CBASS antiviral system. CBASS (cyclic oligonucleotide-based antiphage signaling system) provides immunity against bacteriophages. The CD-NTase protein (CdnA) synthesizes cyclic nucleotides in response to infection; these serve as specific second messenger signals. The signals activate a diverse range of effectors, leading to bacterial cell death and thus abortive phage infection. A type II-A(GA) CBASS system. Functionally, phospholipase that is activated upon binding to the cyclic dinucleotide (CDN) second messenger 3',3'-cyclic GMP-AMP (cGAMP). Degrades phospholipids in the cell membrane. Its function is as follows. The capV-cdnA-cap2-cap3 operon provides about 10(4)-fold protection in strain BWHPSA011 against infection by phage PaMx41. In P.aeruginosa strain PAO1 it confers protection against phages PaMx41 and JBD18 but not JBD67 (JBD18 and JBD67 do not replicate in BWHPSA011 / Pa011). When acb2 in JBD67 is deleted this CBASS operon then protects against JDB67 also. This CBASS system limits prophage induction of lysogenized JBD67 as well as viral lytic replication. The polypeptide is cGAMP-activated phospholipase (Pseudomonas aeruginosa (strain BWHPSA011 / Pa011)).